Here is a 129-residue protein sequence, read N- to C-terminus: Glycine cleavage system H protein (129 aa).

A Lipoyl-binding domain is found at Thr24–Lys106. Lys65 carries the N6-lipoyllysine modification.

This sequence belongs to the GcvH family. The glycine cleavage system is composed of four proteins: P, T, L and H. Requires (R)-lipoate as cofactor.

Functionally, the glycine cleavage system catalyzes the degradation of glycine. The H protein shuttles the methylamine group of glycine from the P protein to the T protein. This is Glycine cleavage system H protein from Escherichia fergusonii (strain ATCC 35469 / DSM 13698 / CCUG 18766 / IAM 14443 / JCM 21226 / LMG 7866 / NBRC 102419 / NCTC 12128 / CDC 0568-73).